Reading from the N-terminus, the 224-residue chain is Putative tyrosine-protein phosphatase OCA6 (224 aa).

Thr-2 bears the Phosphothreonine mark. A Tyrosine-protein phosphatase domain is found at Gln-8–Leu-170. Catalysis depends on Cys-114, which acts as the Phosphocysteine intermediate.

Belongs to the protein-tyrosine phosphatase family.

The protein localises to the cytoplasm. The enzyme catalyses O-phospho-L-tyrosyl-[protein] + H2O = L-tyrosyl-[protein] + phosphate. Its function is as follows. Required for replication of Brome mosaic virus (BMV). The protein is Putative tyrosine-protein phosphatase OCA6 (OCA6) of Saccharomyces cerevisiae (strain ATCC 204508 / S288c) (Baker's yeast).